We begin with the raw amino-acid sequence, 137 residues long: Large-conductance mechanosensitive channel (137 aa).

The next 2 helical transmembrane spans lie at 10 to 30 and 76 to 96; these read FAMRGNVVDLAVGVIIGAAFG and GVFIQNVFDFIIVAFAIFMAI.

Belongs to the MscL family. In terms of assembly, homopentamer.

The protein localises to the cell inner membrane. Channel that opens in response to stretch forces in the membrane lipid bilayer. May participate in the regulation of osmotic pressure changes within the cell. The sequence is that of Large-conductance mechanosensitive channel from Klebsiella pneumoniae subsp. pneumoniae (strain ATCC 700721 / MGH 78578).